Consider the following 368-residue polypeptide: Type 2 DNA topoisomerase 6 subunit A (368 aa).

In terms of domain architecture, Topo IIA-type catalytic spans 9–148; sequence TEDEIARERL…FHMRPEESGA (140 aa). Residue Tyr103 is the O-(5'-phospho-DNA)-tyrosine intermediate of the active site. Residues Glu201 and Asp253 each coordinate Mg(2+).

Belongs to the TOP6A family. Homodimer. Heterotetramer of two Top6A and two Top6B chains. Requires Mg(2+) as cofactor.

It catalyses the reaction ATP-dependent breakage, passage and rejoining of double-stranded DNA.. Functionally, relaxes both positive and negative superturns and exhibits a strong decatenase activity. This chain is Type 2 DNA topoisomerase 6 subunit A, found in Natronomonas pharaonis (strain ATCC 35678 / DSM 2160 / CIP 103997 / JCM 8858 / NBRC 14720 / NCIMB 2260 / Gabara) (Halobacterium pharaonis).